We begin with the raw amino-acid sequence, 350 residues long: Geranylgeranyl pyrophosphate synthase (350 aa).

Residues Lys-66, Arg-69, and His-98 each coordinate isopentenyl diphosphate. Asp-105 and Asp-109 together coordinate Mg(2+). A dimethylallyl diphosphate-binding site is contributed by Arg-114. Arg-115 provides a ligand contact to isopentenyl diphosphate. Residues Lys-200, Thr-201, Gln-236, Asn-243, and Lys-263 each coordinate dimethylallyl diphosphate.

Belongs to the FPP/GGPP synthase family. Mg(2+) serves as cofactor.

The catalysed reaction is isopentenyl diphosphate + dimethylallyl diphosphate = (2E)-geranyl diphosphate + diphosphate. It catalyses the reaction isopentenyl diphosphate + (2E)-geranyl diphosphate = (2E,6E)-farnesyl diphosphate + diphosphate. It carries out the reaction isopentenyl diphosphate + (2E,6E)-farnesyl diphosphate = (2E,6E,10E)-geranylgeranyl diphosphate + diphosphate. Its pathway is secondary metabolite biosynthesis; terpenoid biosynthesis. Geranylgeranyl pyrophosphate synthase; part of the gene cluster that mediates the biosynthesis of pleuromutilin, a tricyclic diterpene showing antibacterial properties. The geranylgeranyl diphosphate (GGPP) synthase ple4 catalyzes the first step in pleuromutilin biosynthesis. GGPP is then substrate of the premutilin synthase (PS) ple3 to yield premutilin. Premutilin synthase is a bifunctional enzyme composed of the fusion of a class II diterpene cyclase (DTC) and a class I diterpene synthase (DTS), with the corresponding domains and active sites containing characteristic aspartate-rich motifs. GGPP is first converted to mutildienyl-diphosphate (MPP) at the class II DTC site. MPP is subsequently further cyclized at the class I DTS site, followed by a 1,5-hydride shift and addition of water prior to terminating deprotonation, to yield premutilin. The cytochrome P450 monooxygenases ple5 and ple6 hydroxylate premutilin at C-11 and C-3, respectively, producing 11-hydroxypremutilin and 3-hydroxypremutilin. The combination of the actions of both ple5 and ple6 leads to the production of 3,11-dihydroxypremutilin. The short chain dehydrogenase ple7 further converts 3,11-dihydroxypremutilin into mutilin. The acetyltransferase ple2 then acetylates mutilin to produce 14-O-acetylmutilin. Finally, the cytochrome P450 monooxygenase ple1 catalyzes hydroxylation on the alpha position of the acetyl side chain of 14-O-acetylmutilin to yield pleuromutilin. In Rhodocybe pseudopiperita (Clitopilus pseudopiperitus), this protein is Geranylgeranyl pyrophosphate synthase.